We begin with the raw amino-acid sequence, 614 residues long: Probable glutamate--tRNA ligase, cytoplasmic (614 aa).

Residue 130–132 (RFA) participates in L-glutamate binding. The 'HIGH' region motif lies at 135–144 (PSGCLHIGHL). Histidine 140 provides a ligand contact to ATP. L-glutamate contacts are provided by residues aspartate 166, 303–307 (YDFVC), and arginine 321. Residues glutamate 324 and 359–363 (VLSKR) contribute to the ATP site. The short motif at 359 to 363 (VLSKR) is the 'KMSKS' region element.

The protein belongs to the class-I aminoacyl-tRNA synthetase family. Glutamate--tRNA ligase type 2 subfamily.

Its subcellular location is the cytoplasm. It carries out the reaction tRNA(Glu) + L-glutamate + ATP = L-glutamyl-tRNA(Glu) + AMP + diphosphate. This chain is Probable glutamate--tRNA ligase, cytoplasmic, found in Vairimorpha ceranae (strain BRL01) (Microsporidian parasite).